Consider the following 430-residue polypeptide: Adenylosuccinate synthetase (430 aa).

Residues 13–19 (GDEGKGK) and 41–43 (GHT) contribute to the GTP site. The active-site Proton acceptor is Asp-14. 2 residues coordinate Mg(2+): Asp-14 and Gly-41. IMP is bound by residues 14–17 (DEGK), 39–42 (NAGH), Thr-130, Arg-144, Gln-225, Thr-240, and Arg-304. His-42 serves as the catalytic Proton donor. 300 to 306 (STTGRAR) is a substrate binding site. GTP-binding positions include Arg-306, 332-334 (KLD), and 414-416 (STG).

Belongs to the adenylosuccinate synthetase family. As to quaternary structure, homodimer. Mg(2+) serves as cofactor.

It is found in the cytoplasm. It catalyses the reaction IMP + L-aspartate + GTP = N(6)-(1,2-dicarboxyethyl)-AMP + GDP + phosphate + 2 H(+). It participates in purine metabolism; AMP biosynthesis via de novo pathway; AMP from IMP: step 1/2. In terms of biological role, plays an important role in the de novo pathway of purine nucleotide biosynthesis. Catalyzes the first committed step in the biosynthesis of AMP from IMP. The protein is Adenylosuccinate synthetase of Thioalkalivibrio sulfidiphilus (strain HL-EbGR7).